Consider the following 62-residue polypeptide: Large ribosomal subunit protein bL33 (62 aa).

The protein belongs to the bacterial ribosomal protein bL33 family.

The protein is Large ribosomal subunit protein bL33 of Trichodesmium erythraeum (strain IMS101).